The primary structure comprises 94 residues: Protein S100-A1 (94 aa).

EF-hand domains follow at residues 13–48 and 50–85; these read INVF…FLDA and KDVD…LTVA. Ca(2+) contacts are provided by Lys28, Glu33, Asp63, Asn65, Asp67, Glu69, and Glu74. Cys86 bears the S-nitrosocysteine mark.

Belongs to the S-100 family. As to quaternary structure, dimer of either two alpha chains, or two beta chains, or one alpha and one beta chain. Also forms heterodimers with S100P. Interacts with AGER. Interacts with CAPZA1. Interacts with FKBP4. Interacts with RYR1 and RYR2. Interacts with CACYBP in a calcium-dependent manner. Interacts with PPP5C (via TPR repeats); the interaction is calcium-dependent and modulates PPP5C activity. Interacts with ATP2A2 and PLN in a Ca(2+)-dependent manner. Interacts with mitochondrial F1-ATPase subunits ATP5F1A and ATP5F1B; these interactions increase F1-ATPase activity. In terms of processing, glutathionylated; glutathionylation increases affinity to calcium about 10-fold. As to expression, highly prevalent in heart. Also found in lesser quantities in skeletal muscle and brain.

The protein resides in the cytoplasm. It localises to the sarcoplasmic reticulum. It is found in the mitochondrion. Its function is as follows. Small calcium binding protein that plays important roles in several biological processes such as Ca(2+) homeostasis, chondrocyte biology and cardiomyocyte regulation. In response to an increase in intracellular Ca(2+) levels, binds calcium which triggers conformational changes. These changes allow interactions with specific target proteins and modulate their activity. Regulates a network in cardiomyocytes controlling sarcoplasmic reticulum Ca(2+) cycling and mitochondrial function through interaction with the ryanodine receptors RYR1 and RYR2, sarcoplasmic reticulum Ca(2+)-ATPase/ATP2A2 and mitochondrial F1-ATPase. Facilitates diastolic Ca(2+) dissociation and myofilament mechanics in order to improve relaxation during diastole. The protein is Protein S100-A1 (S100A1) of Homo sapiens (Human).